The following is a 254-amino-acid chain: Tumor necrosis factor ligand superfamily member 9 (254 aa).

Residues 1–28 (MEYASDASLDPEAPWPPAPRARACRVLP) are Cytoplasmic-facing. A helical; Signal-anchor for type II membrane protein membrane pass occupies residues 29 to 49 (WALVAGLLLLLLLAAACAVFL). The Extracellular segment spans residues 50–254 (ACPWAVSGAR…PAGLPSPRSE (205 aa)). In terms of domain architecture, THD spans 91-240 (MFAQLVAQNV…GATVLGLFRV (150 aa)).

Belongs to the tumor necrosis factor family. In terms of assembly, homotrimer. Expressed in brain, placenta, lung, skeletal muscle and kidney.

It is found in the membrane. In terms of biological role, cytokine that binds to TNFRSF9. Induces the proliferation of activated peripheral blood T-cells. May have a role in activation-induced cell death (AICD). May play a role in cognate interactions between T-cells and B-cells/macrophages. The protein is Tumor necrosis factor ligand superfamily member 9 (TNFSF9) of Homo sapiens (Human).